The chain runs to 274 residues: Dermonecrotic toxin SdSicTox-betaIIB1bvii (274 aa).

Histidine 5 is an active-site residue. Mg(2+) contacts are provided by glutamate 25 and aspartate 27. The active-site Nucleophile is the histidine 41. 2 disulfides stabilise this stretch: cysteine 45–cysteine 51 and cysteine 47–cysteine 190. Position 85 (aspartate 85) interacts with Mg(2+).

It belongs to the arthropod phospholipase D family. Class II subfamily. It depends on Mg(2+) as a cofactor. As to expression, expressed by the venom gland.

The protein localises to the secreted. It carries out the reaction an N-(acyl)-sphingosylphosphocholine = an N-(acyl)-sphingosyl-1,3-cyclic phosphate + choline. The enzyme catalyses an N-(acyl)-sphingosylphosphoethanolamine = an N-(acyl)-sphingosyl-1,3-cyclic phosphate + ethanolamine. It catalyses the reaction a 1-acyl-sn-glycero-3-phosphocholine = a 1-acyl-sn-glycero-2,3-cyclic phosphate + choline. The catalysed reaction is a 1-acyl-sn-glycero-3-phosphoethanolamine = a 1-acyl-sn-glycero-2,3-cyclic phosphate + ethanolamine. Functionally, dermonecrotic toxins cleave the phosphodiester linkage between the phosphate and headgroup of certain phospholipids (sphingolipid and lysolipid substrates), forming an alcohol (often choline) and a cyclic phosphate. This toxin acts on sphingomyelin (SM). It may also act on ceramide phosphoethanolamine (CPE), lysophosphatidylcholine (LPC) and lysophosphatidylethanolamine (LPE), but not on lysophosphatidylserine (LPS), and lysophosphatidylglycerol (LPG). It acts by transphosphatidylation, releasing exclusively cyclic phosphate products as second products. Induces dermonecrosis, hemolysis, increased vascular permeability, edema, inflammatory response, and platelet aggregation. This Sicarius cf. damarensis (strain GJB-2008) (Six-eyed sand spider) protein is Dermonecrotic toxin SdSicTox-betaIIB1bvii.